A 622-amino-acid polypeptide reads, in one-letter code: DNA-directed RNA polymerase subunit gamma (622 aa).

Zn(2+) is bound by residues cysteine 70, cysteine 72, cysteine 85, and cysteine 88. Mg(2+) contacts are provided by aspartate 466, aspartate 468, and aspartate 470.

Belongs to the RNA polymerase beta' chain family. RpoC1 subfamily. As to quaternary structure, in cyanobacteria the RNAP catalytic core is composed of 2 alpha, 1 beta, 1 beta', 1 gamma and 1 omega subunit. When a sigma factor is associated with the core the holoenzyme is formed, which can initiate transcription. It depends on Mg(2+) as a cofactor. The cofactor is Zn(2+).

It catalyses the reaction RNA(n) + a ribonucleoside 5'-triphosphate = RNA(n+1) + diphosphate. DNA-dependent RNA polymerase catalyzes the transcription of DNA into RNA using the four ribonucleoside triphosphates as substrates. This is DNA-directed RNA polymerase subunit gamma from Cyanothece sp. (strain PCC 7425 / ATCC 29141).